The following is a 255-amino-acid chain: Imidazole glycerol phosphate synthase subunit HisF (255 aa).

Residues Asp12 and Asp131 contribute to the active site.

Belongs to the HisA/HisF family. As to quaternary structure, heterodimer of HisH and HisF.

It localises to the cytoplasm. It catalyses the reaction 5-[(5-phospho-1-deoxy-D-ribulos-1-ylimino)methylamino]-1-(5-phospho-beta-D-ribosyl)imidazole-4-carboxamide + L-glutamine = D-erythro-1-(imidazol-4-yl)glycerol 3-phosphate + 5-amino-1-(5-phospho-beta-D-ribosyl)imidazole-4-carboxamide + L-glutamate + H(+). It functions in the pathway amino-acid biosynthesis; L-histidine biosynthesis; L-histidine from 5-phospho-alpha-D-ribose 1-diphosphate: step 5/9. Its function is as follows. IGPS catalyzes the conversion of PRFAR and glutamine to IGP, AICAR and glutamate. The HisF subunit catalyzes the cyclization activity that produces IGP and AICAR from PRFAR using the ammonia provided by the HisH subunit. The protein is Imidazole glycerol phosphate synthase subunit HisF of Neisseria gonorrhoeae (strain ATCC 700825 / FA 1090).